We begin with the raw amino-acid sequence, 306 residues long: Homoserine O-acetyltransferase (306 aa).

Cysteine 142 functions as the Acyl-thioester intermediate in the catalytic mechanism. Residues lysine 163 and serine 194 each coordinate substrate. Residue histidine 237 is the Proton acceptor of the active site. Glutamate 239 is an active-site residue. Arginine 251 serves as a coordination point for substrate.

It belongs to the MetA family.

The protein resides in the cytoplasm. The catalysed reaction is L-homoserine + acetyl-CoA = O-acetyl-L-homoserine + CoA. It participates in amino-acid biosynthesis; L-methionine biosynthesis via de novo pathway; O-acetyl-L-homoserine from L-homoserine: step 1/1. Transfers an acetyl group from acetyl-CoA to L-homoserine, forming acetyl-L-homoserine. This chain is Homoserine O-acetyltransferase, found in Clostridium tetani (strain Massachusetts / E88).